We begin with the raw amino-acid sequence, 123 residues long: Non-specific lipid-transfer protein (123 aa).

An N-terminal signal peptide occupies residues 1–25 (MAVKKMVEAVFVVGLVVTMMNVWGA). 4 disulfides stabilise this stretch: Cys-34–Cys-82, Cys-44–Cys-59, Cys-60–Cys-104, and Cys-80–Cys-119.

It belongs to the plant LTP family.

Its function is as follows. Plant non-specific lipid-transfer proteins transfer phospholipids as well as galactolipids across membranes. May play a role in wax or cutin deposition in the cell walls of expanding epidermal cells and certain secretory tissues. The polypeptide is Non-specific lipid-transfer protein (Pinus taeda (Loblolly pine)).